A 157-amino-acid chain; its full sequence is Protein Smg homolog (157 aa).

This sequence belongs to the Smg family.

The sequence is that of Protein Smg homolog from Aliivibrio salmonicida (strain LFI1238) (Vibrio salmonicida (strain LFI1238)).